The sequence spans 483 residues: V-type proton ATPase subunit H (483 aa).

The residue at position 483 (Ser483) is a Phosphoserine.

Belongs to the V-ATPase H subunit family. As to quaternary structure, V-ATPase is a heteromultimeric enzyme made up of two complexes: the ATP-hydrolytic V1 complex and the proton translocation V0 complex. The V1 complex consists of three catalytic AB heterodimers that form a heterohexamer, three peripheral stalks each consisting of EG heterodimers, one central rotor including subunits D and F, and the regulatory subunits C and H. The proton translocation complex V0 consists of the proton transport subunit a, a ring of proteolipid subunits c9c'', rotary subunit d, subunits e and f, and the accessory subunits ATP6AP1/Ac45 and ATP6AP2/PRR. Interacts with AP2M1. Interacts with TM9SF4 in colon cancer cells. In terms of assembly, (Microbial infection) Interacts with HIV-1 Nef protein. (Microbial infection) Interacts with M.tuberculosis PtpA, which blocks V-ATPase trafficking and phagosome acidification. As to expression, widely expressed.

It localises to the cytoplasmic vesicle. It is found in the clathrin-coated vesicle membrane. Functionally, subunit of the V1 complex of vacuolar(H+)-ATPase (V-ATPase), a multisubunit enzyme composed of a peripheral complex (V1) that hydrolyzes ATP and a membrane integral complex (V0) that translocates protons. V-ATPase is responsible for acidifying and maintaining the pH of intracellular compartments and in some cell types, is targeted to the plasma membrane, where it is responsible for acidifying the extracellular environment. Subunit H is essential for V-ATPase activity, but not for the assembly of the complex. Involved in the endocytosis mediated by clathrin-coated pits, required for the formation of endosomes. The polypeptide is V-type proton ATPase subunit H (ATP6V1H) (Homo sapiens (Human)).